The chain runs to 68 residues: Conotoxin tx3b (68 aa).

The N-terminal stretch at 1 to 19 (MSKLGALLTICLLLFSLTA) is a signal peptide. Residues 20-52 (VPLDGDQHADQPAQRLQDRIPTEDHPLFDPNKR) constitute a propeptide that is removed on maturation. Disulfide bonds link C53-C67, C54-C63, and C59-C66. A Methionine sulfoxide; partial modification is found at M61. C67 is modified (cysteine amide).

In terms of tissue distribution, expressed by the venom duct.

Its subcellular location is the secreted. Its function is as follows. Intracranial injection into mice causes scratching, hyperactivity and circular motion. In Conus textile (Cloth-of-gold cone), this protein is Conotoxin tx3b.